The chain runs to 360 residues: MSYQITINNNTTSNVQNIVIADPNLASLGENVVFSDSQGPLSSLYVYDGVWVVKLRSPLSPGQSITITASSGTPNIDPTIALYYNNGSSYSNLTLVGSPTVSIVQDFGGYAISAYASGDFFLVASPTGFTPSSSRLLVVDRWATTPTSLDAVGLRLYADTNDWFGVVRKYINGAQNVSIEQKISGTYSVVNEIDISQFAAFTDPLVMYLSINGSTANVKVYKQGSNIGTVSGNYSTTPYGNPSMAGYGTVDKHYANFIVLPYEPDPQVTVTPISSPSPTPTPTPTPTPTPTYDITYVVFDVTPSPTPTPTLTSTPTPTPTPTYDITYVIFDVTPSPTPTPTPTPTPTPTPTPTSTTSSNI.

The segment at 269 to 289 is disordered; the sequence is TVTPISSPSPTPTPTPTPTPT. A Thr-Pro(N) repeat occupies 270–291; it reads VTPISSPSPTPTPTPTPTPTPT. Residues 275-289 show a composition bias toward pro residues; sequence SPSPTPTPTPTPTPT. Residues 278 to 353 are 3 Thr-Pro repeats regions and two near identical repeats; that stretch reads PTPTPTPTPT…PTPTPTPTPT (76 aa). Residues 292-301 constitute a repeat; that stretch reads YDITYVVFDV. The stretch at 302-322 is one Thr-Pro(N) repeat; it reads TPSPTPTPTLTSTPTPTPTPT. Positions 323-332 form a repeat; the sequence is YDITYVIFDV. The segment at 332-360 is disordered; that stretch reads VTPSPTPTPTPTPTPTPTPTPTSTTSSNI. Residues 333-353 form a Thr-Pro(N) repeat; it reads TPSPTPTPTPTPTPTPTPTPT. Positions 335 to 351 are enriched in pro residues; it reads SPTPTPTPTPTPTPTPT.

The polypeptide is Viral protein TPX (Thermoproteus tenax (TTV1)).